The following is a 72-amino-acid chain: Translation initiation factor IF-1 (72 aa).

Positions 1–72 (MAKEESIKMN…SKGRITYRAR (72 aa)) constitute an S1-like domain.

It belongs to the IF-1 family. As to quaternary structure, component of the 30S ribosomal translation pre-initiation complex which assembles on the 30S ribosome in the order IF-2 and IF-3, IF-1 and N-formylmethionyl-tRNA(fMet); mRNA recruitment can occur at any time during PIC assembly.

Its subcellular location is the cytoplasm. In terms of biological role, one of the essential components for the initiation of protein synthesis. Stabilizes the binding of IF-2 and IF-3 on the 30S subunit to which N-formylmethionyl-tRNA(fMet) subsequently binds. Helps modulate mRNA selection, yielding the 30S pre-initiation complex (PIC). Upon addition of the 50S ribosomal subunit IF-1, IF-2 and IF-3 are released leaving the mature 70S translation initiation complex. This chain is Translation initiation factor IF-1, found in Alkalilimnicola ehrlichii (strain ATCC BAA-1101 / DSM 17681 / MLHE-1).